A 202-amino-acid chain; its full sequence is Holliday junction branch migration complex subunit RuvA (202 aa).

Residues 1–64 (MISRLRGTVL…EDAFDLFGFL (64 aa)) form a domain I region. Residues 65-143 (TKGEEEVFLL…TIHLEAVSRG (79 aa)) are domain II. The interval 143–147 (GTAPA) is flexible linker. The tract at residues 148 to 202 (AVSGAHADLVSALLNLGYKQPQAEKAADLASERLGAEATFQALFREALKALRSGG) is domain III.

It belongs to the RuvA family. In terms of assembly, homotetramer. Forms an RuvA(8)-RuvB(12)-Holliday junction (HJ) complex. HJ DNA is sandwiched between 2 RuvA tetramers; dsDNA enters through RuvA and exits via RuvB. An RuvB hexamer assembles on each DNA strand where it exits the tetramer. Each RuvB hexamer is contacted by two RuvA subunits (via domain III) on 2 adjacent RuvB subunits; this complex drives branch migration. In the full resolvosome a probable DNA-RuvA(4)-RuvB(12)-RuvC(2) complex forms which resolves the HJ.

It localises to the cytoplasm. Its function is as follows. The RuvA-RuvB-RuvC complex processes Holliday junction (HJ) DNA during genetic recombination and DNA repair, while the RuvA-RuvB complex plays an important role in the rescue of blocked DNA replication forks via replication fork reversal (RFR). RuvA specifically binds to HJ cruciform DNA, conferring on it an open structure. The RuvB hexamer acts as an ATP-dependent pump, pulling dsDNA into and through the RuvAB complex. HJ branch migration allows RuvC to scan DNA until it finds its consensus sequence, where it cleaves and resolves the cruciform DNA. The polypeptide is Holliday junction branch migration complex subunit RuvA (Myxococcus xanthus (strain DK1622)).